We begin with the raw amino-acid sequence, 217 residues long: Ependymin (217 aa).

Residues 1–20 (MHTVKLLCVVFSCLCAIGWA) form the signal peptide. Residues asparagine 73 and asparagine 96 are each glycosylated (N-linked (GlcNAc...) asparagine).

The protein belongs to the ependymin family. As to quaternary structure, forms disulfide-linked dimers. In terms of processing, binds calcium through the terminal sialic acids. As to expression, EPDs are synthesized in the meninx and secreted in the cerebrospinal fluid.

The protein localises to the secreted. Its function is as follows. May play a role in neural plasticity. May be involved during axon regeneration. In Danio rerio (Zebrafish), this protein is Ependymin (epd).